A 940-amino-acid chain; its full sequence is UvrABC system protein A (940 aa).

31–38 is a binding site for ATP; the sequence is GLSGSGKS. The C4-type zinc-finger motif lies at 253 to 280; that stretch reads CPICGYSMRELEPRLFSFNNPAGACPTC. ABC transporter domains lie at 310–587 and 607–937; these read WDRR…PESL and ANPE…RFLK. 640–647 serves as a coordination point for ATP; the sequence is GVSGSGKS. The C4-type zinc-finger motif lies at 740–766; that stretch reads CEACQGDGVIKVEMHFLPDIYVPCDQC.

It belongs to the ABC transporter superfamily. UvrA family. As to quaternary structure, forms a heterotetramer with UvrB during the search for lesions.

It is found in the cytoplasm. In terms of biological role, the UvrABC repair system catalyzes the recognition and processing of DNA lesions. UvrA is an ATPase and a DNA-binding protein. A damage recognition complex composed of 2 UvrA and 2 UvrB subunits scans DNA for abnormalities. When the presence of a lesion has been verified by UvrB, the UvrA molecules dissociate. This is UvrABC system protein A from Escherichia coli O6:H1 (strain CFT073 / ATCC 700928 / UPEC).